A 269-amino-acid polypeptide reads, in one-letter code: Glutamate racemase (269 aa).

Residues 7–8 (DS) and 39–40 (YG) each bind substrate. Cysteine 70 functions as the Proton donor/acceptor in the catalytic mechanism. 71–72 (NT) provides a ligand contact to substrate. The active-site Proton donor/acceptor is the cysteine 194. A substrate-binding site is contributed by 195–196 (TH).

The protein belongs to the aspartate/glutamate racemases family.

The enzyme catalyses L-glutamate = D-glutamate. Its pathway is cell wall biogenesis; peptidoglycan biosynthesis. In terms of biological role, provides the (R)-glutamate required for cell wall biosynthesis. The protein is Glutamate racemase of Ruegeria pomeroyi (strain ATCC 700808 / DSM 15171 / DSS-3) (Silicibacter pomeroyi).